Consider the following 1744-residue polypeptide: Probable disease resistance protein At4g19520 (1744 aa).

One can recognise a TIR 1 domain in the interval 3–163 (DGKEVYISFN…KIVADVRQKL (161 aa)). The active site involves Glu-80. The 220-residue stretch at 192–411 (SLGIWGMAGI…VSEKEIFLDI (220 aa)) folds into the NB-ARC domain. 20 LRR repeats span residues 503–526 (YEDV…AFQH), 557–581 (PPEL…GFQY), 583–602 (VELN…TKNL), 603–626 (EVLK…QYSP), 648–669 (LQHL…PKVP), 670–692 (PSIR…NHSS), 710–733 (DHRK…IVIF), 734–754 (ESLE…QGFP), 755–777 (QNLK…LCHH), 779–802 (SKLV…MSNM), 804–823 (YLAV…KELP), 824–846 (RNLK…LLET), 848–871 (SEVV…MSKL), 892–915 (PLNL…IGDL), 917–939 (LLDT…MHNL), 941–963 (PLKV…LPKV), 987–1010 (YEHR…IRWM), 1011–1035 (PSLK…DFSK), 1037–1059 (LSLR…SLQL), and 1062–1086 (AHGC…TFSN). Residues 1399 to 1559 (RNNDVFVSFH…KVANDIRKKL (161 aa)) form the TIR 2 domain.

It belongs to the disease resistance TIR-NB-LRR family.

The enzyme catalyses NAD(+) + H2O = ADP-D-ribose + nicotinamide + H(+). Functionally, probable disease resistance protein. The protein is Probable disease resistance protein At4g19520 of Arabidopsis thaliana (Mouse-ear cress).